The chain runs to 597 residues: Glutamine--fructose-6-phosphate aminotransferase [isomerizing] (597 aa).

Cys2 acts as the Nucleophile; for GATase activity in catalysis. The 217-residue stretch at 2-218 (CGIVGYIGDS…ENSVGQISLE (217 aa)) folds into the Glutamine amidotransferase type-2 domain. SIS domains lie at 276–416 (IDPE…QLGT) and 449–587 (LSKR…VDHP). The For Fru-6P isomerization activity role is filled by Lys592.

In terms of assembly, homodimer.

The protein resides in the cytoplasm. It carries out the reaction D-fructose 6-phosphate + L-glutamine = D-glucosamine 6-phosphate + L-glutamate. Its function is as follows. Catalyzes the first step in hexosamine metabolism, converting fructose-6P into glucosamine-6P using glutamine as a nitrogen source. This chain is Glutamine--fructose-6-phosphate aminotransferase [isomerizing], found in Helicobacter pylori (strain J99 / ATCC 700824) (Campylobacter pylori J99).